A 253-amino-acid polypeptide reads, in one-letter code: Ubiquinone biosynthesis O-methyltransferase (253 aa).

S-adenosyl-L-methionine contacts are provided by Arg-41, Gly-72, Asp-93, and Met-136.

The protein belongs to the methyltransferase superfamily. UbiG/COQ3 family.

It carries out the reaction a 3-demethylubiquinol + S-adenosyl-L-methionine = a ubiquinol + S-adenosyl-L-homocysteine + H(+). The enzyme catalyses a 3-(all-trans-polyprenyl)benzene-1,2-diol + S-adenosyl-L-methionine = a 2-methoxy-6-(all-trans-polyprenyl)phenol + S-adenosyl-L-homocysteine + H(+). Its pathway is cofactor biosynthesis; ubiquinone biosynthesis. O-methyltransferase that catalyzes the 2 O-methylation steps in the ubiquinone biosynthetic pathway. The chain is Ubiquinone biosynthesis O-methyltransferase from Chelativorans sp. (strain BNC1).